The sequence spans 315 residues: Ribosomal RNA small subunit methyltransferase H (315 aa).

S-adenosyl-L-methionine contacts are provided by residues G35 to H37, D55, F80, D102, and Q109.

This sequence belongs to the methyltransferase superfamily. RsmH family.

It localises to the cytoplasm. The catalysed reaction is cytidine(1402) in 16S rRNA + S-adenosyl-L-methionine = N(4)-methylcytidine(1402) in 16S rRNA + S-adenosyl-L-homocysteine + H(+). Specifically methylates the N4 position of cytidine in position 1402 (C1402) of 16S rRNA. The chain is Ribosomal RNA small subunit methyltransferase H from Buchnera aphidicola subsp. Baizongia pistaciae (strain Bp).